The chain runs to 1347 residues: Neurofascin (1347 aa).

Residues 1-24 form the signal peptide; that stretch reads MARQPPPPWVHAAFLLCLLSLGGA. The Extracellular portion of the chain corresponds to 25-1217; it reads IEIPMDPSIQ…NQADIATQGW (1193 aa). Ig-like C2-type domains lie at 41–137, 143–230, 244–332, 337–424, 429–517, and 521–603; these read PTIT…LQVS, PKEN…NPFT, PSFM…ISVR, PYWL…AFVS, PPRM…VRLE, and PTRI…QDLA. Intrachain disulfides connect Cys-63–Cys-118, Cys-162–Cys-213, Cys-268–Cys-316, and Cys-358–Cys-408. Residue Asn-305 is glycosylated (N-linked (GlcNAc...) asparagine). 2 N-linked (GlcNAc...) asparagine glycosylation sites follow: Asn-409 and Asn-446. Intrachain disulfides connect Cys-452–Cys-501 and Cys-543–Cys-592. Tyr-481 is modified (phosphotyrosine). Asn-483 carries N-linked (GlcNAc...) asparagine glycosylation. At Ser-485 the chain carries Phosphoserine. Fibronectin type-III domains are found at residues 630–725, 730–823, 828–930, and 934–1030; these read RPRD…TSGA, NPGD…SGED, APTE…TPEG, and APRR…PNEA. The interval 713 to 740 is disordered; sequence PSLPSERYRTSGAPPESNPGDVKGEGTR. 2 N-linked (GlcNAc...) asparagine glycosylation sites follow: Asn-752 and Asn-778. The tract at residues 915-934 is disordered; the sequence is GDGPRSETKEFTTPEGVPSA. The segment covering 916 to 926 has biased composition (basic and acidic residues); sequence DGPRSETKEFT. Asn-973 and Asn-988 each carry an N-linked (GlcNAc...) asparagine glycan. 2 disordered regions span residues 1011–1040 and 1090–1111; these read TQVGSGEAVTEESPAPPNEATPTAAPPTLP and TTAAATTTTESPPTTTSGTKIH. Residues 1024–1040 show a composition bias toward pro residues; the sequence is PAPPNEATPTAAPPTLP. Positions 1090-1105 are enriched in low complexity; the sequence is TTAAATTTTESPPTTT. The region spanning 1114–1206 is the Fibronectin type-III 5 domain; sequence APDEQSIWNV…ITFMTSTAYT (93 aa). A helical membrane pass occupies residues 1218 to 1238; that stretch reads FIGLMCAIALLVLILLIVCFI. Over 1239–1347 the chain is Cytoplasmic; that stretch reads KRSRGGKYPV…SPVNAIYSLA (109 aa). Residues 1248 to 1347 form a disordered region; the sequence is VREKKDVPLG…SPVNAIYSLA (100 aa). The span at 1261–1272 shows a compositional bias: acidic residues; the sequence is PKEEDGSFDYSD. Phosphoserine is present on residues Ser-1267, Ser-1281, Ser-1294, Ser-1297, Ser-1333, Ser-1334, and Ser-1338. The span at 1278–1291 shows a compositional bias: polar residues; the sequence is LQGSQTSLDGTIKQ.

It belongs to the immunoglobulin superfamily. L1/neurofascin/NgCAM family. In terms of assembly, horseshoe-shaped homodimer. Probable constituent of a NFASC/NRCAM/ankyrin-G complex. Associates with the sodium channel beta-1 (SCN1B) and beta-3 (SCN3B) subunits. Interacts with GLDN/gliomedin. Interacts with MYOC.

It localises to the cell membrane. The protein resides in the cell junction. Its subcellular location is the paranodal septate junction. Cell adhesion, ankyrin-binding protein which may be involved in neurite extension, axonal guidance, synaptogenesis, myelination and neuron-glial cell interactions. The protein is Neurofascin (NFASC) of Homo sapiens (Human).